Here is a 427-residue protein sequence, read N- to C-terminus: Glucose-1-phosphate adenylyltransferase (427 aa).

AMP-binding residues include arginine 40, histidine 46, and arginine 52. Position 114 (tyrosine 114) interacts with alpha-D-glucose 1-phosphate. Arginine 130 serves as a coordination point for AMP. Alpha-D-glucose 1-phosphate contacts are provided by residues glycine 179, glutamate 194–lysine 195, and serine 212. Arginine 386 lines the AMP pocket.

It belongs to the bacterial/plant glucose-1-phosphate adenylyltransferase family. In terms of assembly, homotetramer.

The catalysed reaction is alpha-D-glucose 1-phosphate + ATP + H(+) = ADP-alpha-D-glucose + diphosphate. Its pathway is glycan biosynthesis; glycogen biosynthesis. With respect to regulation, allosterically activated by fructose-1,6-bisphosphate (F16BP) and inhibited by AMP. In terms of biological role, involved in the biosynthesis of ADP-glucose, a building block required for the elongation reactions to produce glycogen. Catalyzes the reaction between ATP and alpha-D-glucose 1-phosphate (G1P) to produce pyrophosphate and ADP-Glc. The polypeptide is Glucose-1-phosphate adenylyltransferase (Cronobacter sakazakii (strain ATCC BAA-894) (Enterobacter sakazakii)).